The following is a 537-amino-acid chain: Probable feruloyl esterase ARB_07085 (537 aa).

Residues 1–22 form the signal peptide; it reads MVTLPLLLSILPLAAVFSSAAS. N-linked (GlcNAc...) asparagine glycosylation is found at N67, N76, and N189. 3 disulfides stabilise this stretch: C196–C459, C263–C280, and C508–C529. Catalysis depends on S197, which acts as the Acyl-ester intermediate. Ca(2+) is bound by residues D264, D267, V269, D271, and V273. An N-linked (GlcNAc...) asparagine glycan is attached at N339. Catalysis depends on charge relay system residues D419 and H458.

Belongs to the tannase family.

The protein localises to the secreted. It catalyses the reaction feruloyl-polysaccharide + H2O = ferulate + polysaccharide.. Functionally, hydrolyzes the feruloyl-arabinose ester bond in arabinoxylans as well as the feruloyl-galactose and feruloyl-arabinose ester bonds. The chain is Probable feruloyl esterase ARB_07085 from Arthroderma benhamiae (strain ATCC MYA-4681 / CBS 112371) (Trichophyton mentagrophytes).